A 277-amino-acid chain; its full sequence is Radial spoke head protein 9 homolog (277 aa).

Belongs to the flagellar radial spoke RSP9 family. As to quaternary structure, component of axonemal radial spoke complexes.

It is found in the cytoplasm. The protein resides in the cytoskeleton. The protein localises to the cilium axoneme. Its subcellular location is the flagellum axoneme. It localises to the cell projection. It is found in the kinocilium. In terms of biological role, functions as part of axonemal radial spoke complexes that play an important part in the motility of sperm and cilia. Essential for both the radial spoke head assembly and the central pair microtubule stability in ependymal motile cilia. Required for motility of olfactory and neural cilia and for the structural integrity of ciliary axonemes in both 9+0 and 9+2 motile cilia. The sequence is that of Radial spoke head protein 9 homolog (rsph9) from Xenopus tropicalis (Western clawed frog).